The chain runs to 81 residues: Kappa-theraphotoxin-Gr2c (81 aa).

An N-terminal signal peptide occupies residues 1-19; the sequence is MKAFFVILGLALLCAYSFA. Residues 20–50 constitute a propeptide that is removed on maturation; that stretch reads LEEQDQLSLRNDLLTVMFAENSELTPETEER. 3 disulfides stabilise this stretch: C52–C66, C59–C71, and C65–C75.

This sequence belongs to the neurotoxin 30 (phrixotoxin) family. Expressed by the venom gland.

The protein localises to the secreted. Functionally, inhibits sodium channels Nav1.1/SCN1A (IC(50)=5.7 uM), Nav1.2/SCN2A (IC(50)=12 uM), Nav1.4/SCN4A (IC(50)=4 uM), Nav1.6/SCN8A (IC(50)=6.6 uM), Nav1.7/SCN9A (IC(50)=13.6-1030 nM), potassium channels Kv11.1/KCNH2 (IC(50)=4.7 uM), as well as high-voltage-gated calcium channels Cav1.2/CACNA1C (IC(50)= nM). Also blocks mechanosensitive ion channels (also named stretch-activated channels or SACs) and the hypotonic cell swelling induced calcium increase associated with the activation of such channels. It can thus be useful in treating cardiac ventricular disturbances. Also induces analgesia in mammals. This Grammostola rosea (Chilean rose tarantula) protein is Kappa-theraphotoxin-Gr2c.